The following is a 293-amino-acid chain: Zinc finger protein 80 (293 aa).

2 C2H2-type zinc fingers span residues 69–91 (YKCK…HQIH) and 97–119 (YECQ…MRIH). A C2H2-type 3; atypical zinc finger spans residues 125–147 (CKCVECGKVFNRRSHLLCYHQIH). 4 consecutive C2H2-type zinc fingers follow at residues 153-175 (YECS…RMTH), 181-203 (FGCK…MKIH), 209-231 (YKCG…SMTH), and 237-259 (YECK…TRSH).

The protein belongs to the krueppel C2H2-type zinc-finger protein family.

It localises to the nucleus. Its function is as follows. May be involved in transcriptional regulation. This chain is Zinc finger protein 80 (ZNF80), found in Macaca mulatta (Rhesus macaque).